The primary structure comprises 211 residues: dITP/XTP pyrophosphatase (211 aa).

7–12 serves as a coordination point for substrate; the sequence is TSNKKK. Positions 43 and 72 each coordinate Mg(2+). D72 functions as the Proton acceptor in the catalytic mechanism. Substrate contacts are provided by residues S73, 169–172, K190, and 195–196; these read FGYD and HR.

This sequence belongs to the HAM1 NTPase family. As to quaternary structure, homodimer. Requires Mg(2+) as cofactor.

It carries out the reaction XTP + H2O = XMP + diphosphate + H(+). The enzyme catalyses dITP + H2O = dIMP + diphosphate + H(+). It catalyses the reaction ITP + H2O = IMP + diphosphate + H(+). In terms of biological role, pyrophosphatase that catalyzes the hydrolysis of nucleoside triphosphates to their monophosphate derivatives, with a high preference for the non-canonical purine nucleotides XTP (xanthosine triphosphate), dITP (deoxyinosine triphosphate) and ITP. Seems to function as a house-cleaning enzyme that removes non-canonical purine nucleotides from the nucleotide pool, thus preventing their incorporation into DNA/RNA and avoiding chromosomal lesions. The polypeptide is dITP/XTP pyrophosphatase (Hydrogenobaculum sp. (strain Y04AAS1)).